The chain runs to 415 residues: MSTMREMYPKKGRVILHVDMNCFFASVEIAHDSSLQGKPLAVAGNEKERKGIIITCSYEAREYGIRTTMPLWEAKRLCPQLIVRRPNFTLYREASFQMFQILSRFTEKIQPVSIDEGYLDITDCYALGSPLEIAKMIQQALLTELQLPCSIGIAPNLFLAKTASDMKKPLGITVLRKRDIPEMIWPLPVGAMHGIGEKTAEKLNDIHIQTIEQLAKGNEHIIRAKIGKHGVDLQRRAKGMDDRQVDPSQMGQHKSVGNSMTFSKDMDEEKELLDMLERLSKSVSKRLQKRTLVSYNIQIMIKYHDRRTVTRSKQLKNAIWEERDIFQAASRLWKQHWDGDSVRLLGVTATEIEWKTESVKQLDLFSFEEDAKEEPLLAVIDQINDKYGMPLLQRGSQLLRKQEKSFQQKLESKFM.

The region spanning 15-196 is the UmuC domain; sequence ILHVDMNCFF…LPVGAMHGIG (182 aa). Mg(2+) is bound by residues Asp19 and Asp115. Glu116 is a catalytic residue. The interval 238–260 is disordered; the sequence is KGMDDRQVDPSQMGQHKSVGNSM. Positions 246 to 260 are enriched in polar residues; it reads DPSQMGQHKSVGNSM.

It belongs to the DNA polymerase type-Y family. As to quaternary structure, monomer. Mg(2+) is required as a cofactor.

The protein localises to the cytoplasm. It catalyses the reaction DNA(n) + a 2'-deoxyribonucleoside 5'-triphosphate = DNA(n+1) + diphosphate. Poorly processive, error-prone DNA polymerase involved in untargeted mutagenesis. Copies undamaged DNA at stalled replication forks, which arise in vivo from mismatched or misaligned primer ends. These misaligned primers can be extended by PolIV. Exhibits no 3'-5' exonuclease (proofreading) activity. May be involved in translesional synthesis, in conjunction with the beta clamp from PolIII. The sequence is that of DNA polymerase IV from Bacillus cereus (strain ZK / E33L).